Consider the following 975-residue polypeptide: Protein bicaudal D homolog 1 (975 aa).

Coiled-coil stretches lie at residues 1–265 and 319–496; these read MAAE…HISI and SELN…IANE. Disordered stretches follow at residues 383 to 403, 545 to 616, 800 to 824, 836 to 877, and 922 to 975; these read SSKE…GEEA, RSGS…LDTS, DHEQ…VSGE, LLHS…ASYL, and DCQQ…PPHP. Composition is skewed to basic and acidic residues over residues 385 to 403 and 581 to 590; these read KELK…GEEA and VAKESTEASK. Over residues 592–602 the composition is skewed to polar residues; that stretch reads PSPTKTPTISP. The stretch at 663 to 803 forms a coiled coil; it reads IDKDKEALME…LEDLEFDHEQ (141 aa). The interaction with RAB6A stretch occupies residues 663 to 803; sequence IDKDKEALME…LEDLEFDHEQ (141 aa). Residues 840–877 are compositionally biased toward polar residues; it reads QGPQTPNIRVSSGTQRKRQFSPSLCDQSRPRTSGASYL.

The protein belongs to the BicD family. Interacts with RAB6A. Interacts (via C-terminus) with RAB6B (GTP-bound); the interaction is direct. Interacts with CLIP-115 and KIFC2. As to quaternary structure, (Microbial infection) Interacts with human cytomegalovirus/HHV-5 protein UL32. In terms of tissue distribution, expressed in the brain, heart and skeletal muscle.

It localises to the golgi apparatus. In terms of biological role, regulates coat complex coatomer protein I (COPI)-independent Golgi-endoplasmic reticulum transport by recruiting the dynein-dynactin motor complex. This chain is Protein bicaudal D homolog 1 (BICD1), found in Homo sapiens (Human).